The chain runs to 425 residues: Enolase (425 aa).

Glutamine 163 contacts (2R)-2-phosphoglycerate. The active-site Proton donor is the glutamate 205. 3 residues coordinate Mg(2+): aspartate 242, glutamate 285, and aspartate 312. Positions 337, 366, 367, and 388 each coordinate (2R)-2-phosphoglycerate. Lysine 337 functions as the Proton acceptor in the catalytic mechanism.

This sequence belongs to the enolase family. The cofactor is Mg(2+).

The protein resides in the cytoplasm. It localises to the secreted. The protein localises to the cell surface. It carries out the reaction (2R)-2-phosphoglycerate = phosphoenolpyruvate + H2O. It functions in the pathway carbohydrate degradation; glycolysis; pyruvate from D-glyceraldehyde 3-phosphate: step 4/5. Functionally, catalyzes the reversible conversion of 2-phosphoglycerate (2-PG) into phosphoenolpyruvate (PEP). It is essential for the degradation of carbohydrates via glycolysis. The sequence is that of Enolase from Paracoccus denitrificans (strain Pd 1222).